We begin with the raw amino-acid sequence, 43 residues long: B melanoma antigen 1 (43 aa).

An N-terminal signal peptide occupies residues 1–17 (MAARAVFLALSAQLLQA).

The protein belongs to the BAGE family. As to expression, not expressed in normal tissues, except in testis. Expressed with significant proportion in melanomas, but also in tumors of various histological origins, such as bladder carcinomas, head and neck squamous cell carcinomas, lung and breast carcinomas. Not expressed in renal, colorectal and prostatic carcinomas, leukemias and lymphomas. More frequently expressed in metastatic melanomas than in primary melanomas.

Its subcellular location is the secreted. Unknown. Antigen recognized on a melanoma by autologous cytolytic T-lymphocytes. This Homo sapiens (Human) protein is B melanoma antigen 1 (BAGE).